Here is a 382-residue protein sequence, read N- to C-terminus: Opsin Rh3 (382 aa).

At 1-56 the chain is on the extracellular side; sequence MEYHNVSSVLGNVSSVLRPDARLSAESRLLGWNVPPDELRHIPEHWLIYPEPPESM. The N-linked (GlcNAc...) asparagine glycan is linked to Asn-12. Residues 57-81 traverse the membrane as a helical segment; the sequence is NYLLGTLYIFFTVISMIGNGLVMWV. Residues 82–93 lie on the Cytoplasmic side of the membrane; sequence FSAAKSLRTPSN. Residues 94-118 form a helical membrane-spanning segment; it reads ILVINLAFCDFMMMIKTPIFIYNSF. Residues 119-132 lie on the Extracellular side of the membrane; that stretch reads HQGYALGHLGCQIF. Cys-129 and Cys-206 are disulfide-bonded. Residues 133–152 form a helical membrane-spanning segment; sequence GVIGSYTGIAAGATNAFIAY. Residues 153–170 lie on the Cytoplasmic side of the membrane; that stretch reads DRYNVITRPMEGKMTHGK. The helical transmembrane segment at 171-195 threads the bilayer; that stretch reads AIAMIIFIYLYATPWVVACYTESWG. Over 196 to 219 the chain is Extracellular; the sequence is RFVPEGYLTSCTFDYLTDNFDTRL. Residues 220 to 247 traverse the membrane as a helical segment; sequence FVACIFFFSFVCPTTMITYYYSQIVGHV. At 248–283 the chain is on the cytoplasmic side; that stretch reads FSHEKALRDQAKKMNVDSLRSNVDKSKEAAEIRIAK. A helical membrane pass occupies residues 284 to 307; it reads AAITICFLFFASWTPYGVMSLIGA. The Extracellular portion of the chain corresponds to 308 to 315; that stretch reads FGDKTLLT. Residues 316 to 340 form a helical membrane-spanning segment; sequence PGATMIPACTCKMVACIDPFVYAIS. Lys-327 is subject to N6-(retinylidene)lysine. Topologically, residues 341-382 are cytoplasmic; the sequence is HPRYRMELQKRCPWLAISEKAPESAAAISTSTTQEQQQTTAA.

This sequence belongs to the G-protein coupled receptor 1 family. Opsin subfamily. In terms of processing, phosphorylated on some or all of the serine and threonine residues present in the C-terminal region.

Its subcellular location is the membrane. Functionally, visual pigments are the light-absorbing molecules that mediate vision. They consist of an apoprotein, opsin, covalently linked to cis-retinal. This is Opsin Rh3 (Rh3) from Drosophila pseudoobscura pseudoobscura (Fruit fly).